The sequence spans 43 residues: Protein PsbN (43 aa).

The chain crosses the membrane as a helical span at residues 4–24; that stretch reads ATIIVIFVSSLLVGITAYSVY.

It belongs to the PsbN family.

It is found in the plastid. Its subcellular location is the chloroplast thylakoid membrane. Its function is as follows. May play a role in photosystem I and II biogenesis. This is Protein PsbN from Thalassiosira pseudonana (Marine diatom).